The following is a 517-amino-acid chain: Glutamate--tRNA ligase (517 aa).

The short motif at 14-24 (PSPTGPLHIGG) is the 'HIGH' region element. Residues 266–270 (KLSKR) carry the 'KMSKS' region motif. Lys-269 contributes to the ATP binding site.

Belongs to the class-I aminoacyl-tRNA synthetase family. Glutamate--tRNA ligase type 1 subfamily. As to quaternary structure, monomer.

The protein localises to the cytoplasm. It catalyses the reaction tRNA(Glu) + L-glutamate + ATP = L-glutamyl-tRNA(Glu) + AMP + diphosphate. Its function is as follows. Catalyzes the attachment of glutamate to tRNA(Glu) in a two-step reaction: glutamate is first activated by ATP to form Glu-AMP and then transferred to the acceptor end of tRNA(Glu). The polypeptide is Glutamate--tRNA ligase (Cytophaga hutchinsonii (strain ATCC 33406 / DSM 1761 / CIP 103989 / NBRC 15051 / NCIMB 9469 / D465)).